We begin with the raw amino-acid sequence, 91 residues long: MLEFISRMLGKEPASKNVAKERLRLVLVHDRATISPHMLNQLKEDLIKVISNYMEIDEGALEVNLNQDDREVALIANIPVIKMKRDYSVKG.

Belongs to the MinE family.

Its function is as follows. Prevents the cell division inhibition by proteins MinC and MinD at internal division sites while permitting inhibition at polar sites. This ensures cell division at the proper site by restricting the formation of a division septum at the midpoint of the long axis of the cell. In Desulfitobacterium hafniense (strain DSM 10664 / DCB-2), this protein is Cell division topological specificity factor.